The primary structure comprises 285 residues: Probable fructose-bisphosphate aldolase (285 aa).

S50 lines the D-glyceraldehyde 3-phosphate pocket. The active-site Proton donor is D85. Residues H86, D107, E137, and H181 each coordinate Zn(2+). G182 is a binding site for dihydroxyacetone phosphate. H209 is a binding site for Zn(2+). Residues 210 to 212 and 231 to 234 contribute to the dihydroxyacetone phosphate site; these read GGT and NVNT. T212 and T234 each carry phosphothreonine.

This sequence belongs to the class II fructose-bisphosphate aldolase family. It depends on Zn(2+) as a cofactor. Phosphorylated during sporulation.

The enzyme catalyses beta-D-fructose 1,6-bisphosphate = D-glyceraldehyde 3-phosphate + dihydroxyacetone phosphate. Its pathway is carbohydrate degradation; glycolysis; D-glyceraldehyde 3-phosphate and glycerone phosphate from D-glucose: step 4/4. Catalyzes the aldol condensation of dihydroxyacetone phosphate (DHAP or glycerone-phosphate) with glyceraldehyde 3-phosphate (G3P) to form fructose 1,6-bisphosphate (FBP) in gluconeogenesis and the reverse reaction in glycolysis. The protein is Probable fructose-bisphosphate aldolase (fbaA) of Bacillus subtilis (strain 168).